Here is a 354-residue protein sequence, read N- to C-terminus: Inactive ADP-ribosyltransferase arh2 (354 aa).

Belongs to the ADP-ribosylglycohydrolase family. In terms of tissue distribution, expressed in heart (at protein level). A short form is detected in both heart and tadpole tail (at protein level).

Its subcellular location is the cytoplasm. The protein resides in the myofibril. The protein localises to the sarcomere. Functionally, required for myofibril assembly and outgrowth of the cardiac chambers in the developing heart. Appears to be catalytically inactive, showing no activity against O-acetyl-ADP-ribose. This chain is Inactive ADP-ribosyltransferase arh2 (adprhl1), found in Xenopus laevis (African clawed frog).